Here is a 293-residue protein sequence, read N- to C-terminus: tRNA pseudouridine synthase B (293 aa).

Aspartate 38 acts as the Nucleophile in catalysis.

Belongs to the pseudouridine synthase TruB family. Type 1 subfamily.

It carries out the reaction uridine(55) in tRNA = pseudouridine(55) in tRNA. Responsible for synthesis of pseudouridine from uracil-55 in the psi GC loop of transfer RNAs. The protein is tRNA pseudouridine synthase B of Trichormus variabilis (strain ATCC 29413 / PCC 7937) (Anabaena variabilis).